The sequence spans 495 residues: Calcium-dependent protein kinase 11 (495 aa).

The Protein kinase domain occupies 26-284; the sequence is YLLGKKLGQG…AHEALCHPWI (259 aa). Residues 32–40 and K55 contribute to the ATP site; that span reads LGQGQFGTT. The Proton acceptor role is filled by D150. The residue at position 190 (S190) is a Phosphoserine. The interval 290–320 is autoinhibitory domain; the sequence is APDKPLDPAVLSRLKQFSQMNKIKKMALRVI. EF-hand domains are found at residues 327–362, 363–398, 399–434, and 438–468; these read EEIG…VGSE, LMES…MNKM, EREE…FGLC, and LDDM…GDGV. Ca(2+)-binding residues include D340, D342, S344, T346, E351, D376, D378, S380, T382, E387, D412, D414, S416, Y418, E423, D446, D448, D450, K452, and E457.

Belongs to the protein kinase superfamily. Ser/Thr protein kinase family. CDPK subfamily. As to quaternary structure, interacts with Di19.

It is found in the cytoplasm. Its subcellular location is the nucleus. It catalyses the reaction L-seryl-[protein] + ATP = O-phospho-L-seryl-[protein] + ADP + H(+). It carries out the reaction L-threonyl-[protein] + ATP = O-phospho-L-threonyl-[protein] + ADP + H(+). With respect to regulation, activated by calcium. Autophosphorylation may play an important role in the regulation of the kinase activity. Functionally, may play a role in signal transduction pathways that involve calcium as a second messenger. Functions as a regulator of the calcium-mediated abscisic acid (ABA) signaling pathway. Phosphorylates ABA-responsive transcription factors ABF1 and ABF4 in vitro. In Arabidopsis thaliana (Mouse-ear cress), this protein is Calcium-dependent protein kinase 11 (CPK11).